A 154-amino-acid polypeptide reads, in one-letter code: Ribosome maturation factor RimP (154 aa).

The protein belongs to the RimP family.

Its subcellular location is the cytoplasm. Its function is as follows. Required for maturation of 30S ribosomal subunits. The sequence is that of Ribosome maturation factor RimP from Salmonella agona (strain SL483).